A 630-amino-acid polypeptide reads, in one-letter code: MLMRKVPGFVPASPWGLRLPQKFLFLLFLSGLVTLCFGALFLLPHSSRLKRLFLAPRTQQPGLEVVAEIAGHAPAREQEPPPNPAPAAPAPGEDDPSSWASPRRRKGGLRRTRPTGPREEATAARGNSIPASRPGDEGVPFRFDFNAFRSRLRHPVLGTRADESQEPQSQVRAQREKIKEMMQFAWQSYKRYAMGKNELRPLTKDGYEGNMFGGLSGATVIDSLDTLYLMELKEEFQEAKAWVGESFHLNVSGEASLFEVNIRYIGGLLSAFYLTGEEVFRIKAIRLGEKLLPAFNTPTGIPKGVVSFKSGNWGWATAGSSSILAEFGSLHLEFLHLTELSGNQVFAEKVRNIRKVLRKIEKPFGLYPNFLSPVSGNWVQHHVSVGGLGDSFYEYLIKSWLMSGKTDMEAKNMYYEALEAIETYLLNVSPGGLTYIAEWRGGILDHKMGHLACFSGGMIALGAEDAKEEKRAHYRELAAQITKTCHESYARSDTKLGPEAFWFNSGREAVATQLSESYYILRPEVVESYMYLWRQTHNPIYREWGWEVVLALEKYCRTEAGFSGIQDVYSSTPNHDNKQQSFFLAETLKYLYLLFSEDDLLSLEDWVFNTEAHPLPVNHSDSSGRAWGRH.

Over 1–22 (MLMRKVPGFVPASPWGLRLPQK) the chain is Cytoplasmic. Residues 23–43 (FLFLLFLSGLVTLCFGALFLL) form a helical; Signal-anchor for type II membrane protein membrane-spanning segment. Over 44–630 (PHSSRLKRLF…DSSGRAWGRH (587 aa)) the chain is Lumenal. The interval 74–140 (PAREQEPPPN…ASRPGDEGVP (67 aa)) is disordered. Residues 80-89 (PPPNPAPAAP) are compositionally biased toward pro residues. Residues 102–113 (PRRRKGGLRRTR) are compositionally biased toward basic residues. Serine 164 carries the phosphoserine modification. Residue asparagine 250 is glycosylated (N-linked (GlcNAc...) asparagine). A disulfide bond links cysteine 453 and cysteine 485. Glutamate 499 functions as the Proton donor in the catalytic mechanism. Threonine 610 lines the Ca(2+) pocket. Asparagine 618 carries N-linked (GlcNAc...) asparagine glycosylation.

It belongs to the glycosyl hydrolase 47 family. Ca(2+) serves as cofactor. As to expression, expressed in most tissues with the exception of lung, muscle and pancreas. Highly expressed in placenta.

Its subcellular location is the golgi apparatus membrane. It carries out the reaction N(4)-(alpha-D-Man-(1-&gt;2)-alpha-D-Man-(1-&gt;2)-alpha-D-Man-(1-&gt;3)-[alpha-D-Man-(1-&gt;2)-alpha-D-Man-(1-&gt;3)-[alpha-D-Man-(1-&gt;2)-alpha-D-Man-(1-&gt;6)]-alpha-D-Man-(1-&gt;6)]-beta-D-Man-(1-&gt;4)-beta-D-GlcNAc-(1-&gt;4)-beta-D-GlcNAc)-L-asparaginyl-[protein] (N-glucan mannose isomer 9A1,2,3B1,2,3) + 4 H2O = N(4)-(alpha-D-Man-(1-&gt;3)-[alpha-D-Man-(1-&gt;3)-[alpha-D-Man-(1-&gt;6)]-alpha-D-Man-(1-&gt;6)]-beta-D-Man-(1-&gt;4)-beta-D-GlcNAc-(1-&gt;4)-beta-D-GlcNAc)-L-asparaginyl-[protein] (N-glucan mannose isomer 5A1,2) + 4 beta-D-mannose. The catalysed reaction is N(4)-(alpha-D-Man-(1-&gt;2)-alpha-D-Man-(1-&gt;2)-alpha-D-Man-(1-&gt;3)-[alpha-D-Man-(1-&gt;3)-[alpha-D-Man-(1-&gt;2)-alpha-D-Man-(1-&gt;6)]-alpha-D-Man-(1-&gt;6)]-beta-D-Man-(1-&gt;4)-beta-D-GlcNAc-(1-&gt;4)-beta-D-GlcNAc)-L-asparaginyl-[protein] (N-glucan mannose isomer 8A1,2,3B1,3) + 3 H2O = N(4)-(alpha-D-Man-(1-&gt;3)-[alpha-D-Man-(1-&gt;3)-[alpha-D-Man-(1-&gt;6)]-alpha-D-Man-(1-&gt;6)]-beta-D-Man-(1-&gt;4)-beta-D-GlcNAc-(1-&gt;4)-beta-D-GlcNAc)-L-asparaginyl-[protein] (N-glucan mannose isomer 5A1,2) + 3 beta-D-mannose. It functions in the pathway protein modification; protein glycosylation. Its activity is regulated as follows. Inhibited by both 1-deoxymannojirimycin and kifunensine. Functionally, involved in the maturation of Asn-linked oligosaccharides. Trim alpha-1,2-linked mannose residues from Man(9)GlcNAc(2) to produce first Man(8)GlcNAc(2) then Man(6)GlcNAc and a small amount of Man(5)GlcNAc. The protein is Mannosyl-oligosaccharide 1,2-alpha-mannosidase IC (MAN1C1) of Homo sapiens (Human).